The sequence spans 313 residues: Protein FixB (313 aa).

255 to 283 (LYLAVGISGQIQHMVGANASQTIFAINKD) is an FAD binding site.

Belongs to the ETF alpha-subunit/FixB family. In terms of assembly, heterodimer of FixA and FixB.

It functions in the pathway amine and polyamine metabolism; carnitine metabolism. In terms of biological role, required for anaerobic carnitine reduction. May bring reductant to CaiA. The protein is Protein FixB of Escherichia coli O8 (strain IAI1).